Here is a 338-residue protein sequence, read N- to C-terminus: Ketol-acid reductoisomerase (NADP(+)) (338 aa).

The 181-residue stretch at 1–181 (MKVYYDKDAD…GGGKAGIIET (181 aa)) folds into the KARI N-terminal Rossmann domain. NADP(+) is bound by residues 24 to 27 (YGSQ), arginine 47, and serine 52. Residue histidine 107 is part of the active site. Residue glycine 133 participates in NADP(+) binding. One can recognise a KARI C-terminal knotted domain in the interval 182-327 (NFREETETDL…EKLRAMMPWI (146 aa)). Aspartate 190, glutamate 194, glutamate 226, and glutamate 230 together coordinate Mg(2+). Residue serine 251 participates in substrate binding.

It belongs to the ketol-acid reductoisomerase family. Mg(2+) serves as cofactor.

The enzyme catalyses (2R)-2,3-dihydroxy-3-methylbutanoate + NADP(+) = (2S)-2-acetolactate + NADPH + H(+). The catalysed reaction is (2R,3R)-2,3-dihydroxy-3-methylpentanoate + NADP(+) = (S)-2-ethyl-2-hydroxy-3-oxobutanoate + NADPH + H(+). The protein operates within amino-acid biosynthesis; L-isoleucine biosynthesis; L-isoleucine from 2-oxobutanoate: step 2/4. It participates in amino-acid biosynthesis; L-valine biosynthesis; L-valine from pyruvate: step 2/4. In terms of biological role, involved in the biosynthesis of branched-chain amino acids (BCAA). Catalyzes an alkyl-migration followed by a ketol-acid reduction of (S)-2-acetolactate (S2AL) to yield (R)-2,3-dihydroxy-isovalerate. In the isomerase reaction, S2AL is rearranged via a Mg-dependent methyl migration to produce 3-hydroxy-3-methyl-2-ketobutyrate (HMKB). In the reductase reaction, this 2-ketoacid undergoes a metal-dependent reduction by NADPH to yield (R)-2,3-dihydroxy-isovalerate. In Methylibium petroleiphilum (strain ATCC BAA-1232 / LMG 22953 / PM1), this protein is Ketol-acid reductoisomerase (NADP(+)).